A 35-amino-acid polypeptide reads, in one-letter code: Photosystem II reaction center protein T (35 aa).

The chain crosses the membrane as a helical span at residues 3–23 (AFAYTLLMTLVVATLFFAVAF).

The protein belongs to the PsbT family. As to quaternary structure, PSII is composed of 1 copy each of membrane proteins PsbA, PsbB, PsbC, PsbD, PsbE, PsbF, PsbH, PsbI, PsbJ, PsbK, PsbL, PsbM, PsbT, PsbX, PsbY, Psb30/Ycf12, peripheral proteins PsbO, CyanoQ (PsbQ), PsbU, PsbV and a large number of cofactors. It forms dimeric complexes.

Its subcellular location is the cellular thylakoid membrane. Functionally, found at the monomer-monomer interface of the photosystem II (PS II) dimer, plays a role in assembly and dimerization of PSII. PSII is a light-driven water plastoquinone oxidoreductase, using light energy to abstract electrons from H(2)O, generating a proton gradient subsequently used for ATP formation. In Prochlorococcus marinus (strain MIT 9303), this protein is Photosystem II reaction center protein T.